Here is a 296-residue protein sequence, read N- to C-terminus: NAD kinase (296 aa).

The active-site Proton acceptor is the Asp-73. Residues 73 to 74 (DG), Lys-78, 151 to 152 (NE), Arg-178, Asp-180, and 191 to 196 (TAHAMS) contribute to the NAD(+) site.

It belongs to the NAD kinase family. A divalent metal cation is required as a cofactor.

It is found in the cytoplasm. It catalyses the reaction NAD(+) + ATP = ADP + NADP(+) + H(+). In terms of biological role, involved in the regulation of the intracellular balance of NAD and NADP, and is a key enzyme in the biosynthesis of NADP. Catalyzes specifically the phosphorylation on 2'-hydroxyl of the adenosine moiety of NAD to yield NADP. The polypeptide is NAD kinase (Francisella tularensis subsp. holarctica (strain FTNF002-00 / FTA)).